The primary structure comprises 83 residues: MSGSTGERSFADIITSIRYWVIHSITIPSLFIAGWLFVSTGLAYDVFGSPRPNEYFTESRQGIPLITGRFDSLEQLDKFSNPF.

Residues Val-21–Trp-35 traverse the membrane as a helical segment. Position 23 (His-23) interacts with heme.

The protein belongs to the PsbE/PsbF family. In terms of assembly, heterodimer of an alpha subunit and a beta subunit. PSII is composed of 1 copy each of membrane proteins PsbA, PsbB, PsbC, PsbD, PsbE, PsbF, PsbH, PsbI, PsbJ, PsbK, PsbL, PsbM, PsbT, PsbX, PsbY, PsbZ, Psb30/Ycf12, at least 3 peripheral proteins of the oxygen-evolving complex and a large number of cofactors. It forms dimeric complexes. Heme b is required as a cofactor.

The protein resides in the plastid. It localises to the chloroplast thylakoid membrane. Its function is as follows. This b-type cytochrome is tightly associated with the reaction center of photosystem II (PSII). PSII is a light-driven water:plastoquinone oxidoreductase that uses light energy to abstract electrons from H(2)O, generating O(2) and a proton gradient subsequently used for ATP formation. It consists of a core antenna complex that captures photons, and an electron transfer chain that converts photonic excitation into a charge separation. The protein is Cytochrome b559 subunit alpha of Phalaenopsis aphrodite subsp. formosana (Moth orchid).